Consider the following 953-residue polypeptide: Catenin alpha-2 (953 aa).

Residue Thr632 is modified to Phosphothreonine. 3 positions are modified to phosphoserine: Ser640, Ser651, and Ser901. A compositionally biased stretch (basic and acidic residues) spans 912–927 (EKKPLVKREKPEEFQT). Positions 912–939 (EKKPLVKREKPEEFQTRVRRGSQKKHIS) are disordered. A compositionally biased stretch (basic residues) spans 928 to 938 (RVRRGSQKKHI). Ser939 is subject to Phosphoserine.

This sequence belongs to the vinculin/alpha-catenin family. In terms of assembly, interacts with CDH1 and CDH2. Interacts with ZNF639; recruits CTNNA2 to the nucleus. Interacts with F-actin. In terms of tissue distribution, expressed almost exclusively in the nervous system.

The protein localises to the cell membrane. The protein resides in the cytoplasm. It is found in the cytoskeleton. Its subcellular location is the cell junction. It localises to the adherens junction. The protein localises to the cell projection. The protein resides in the axon. It is found in the nucleus. May function as a linker between cadherin adhesion receptors and the cytoskeleton to regulate cell-cell adhesion and differentiation in the nervous system. Required for proper regulation of cortical neuronal migration and neurite growth. It acts as a negative regulator of Arp2/3 complex activity and Arp2/3-mediated actin polymerization. It thereby suppresses excessive actin branching which would impair neurite growth and stability. Regulates morphological plasticity of synapses and cerebellar and hippocampal lamination during development. Functions in the control of startle modulation. This is Catenin alpha-2 (Ctnna2) from Mus musculus (Mouse).